The following is a 433-amino-acid chain: Mitochondrial distribution and morphology protein 12 (433 aa).

In terms of domain architecture, SMP-LTD spans 1–433 (MSIDIDWERA…VYPSFWTFLI (433 aa)). Disordered regions lie at residues 62-113 (LSDP…GGQM), 180-279 (TPLG…RMRE), and 356-376 (GPETAAGSGGGDTLEPNSPRR). Residues 81 to 96 (SEERSPTREPVDRYGN) show a composition bias toward basic and acidic residues. Positions 214 to 236 (SAQSRPSTANTGNTLPSRDSMSV) are enriched in polar residues. Residues 268–279 (PLDDTPPRRMRE) are compositionally biased toward basic and acidic residues.

This sequence belongs to the MDM12 family. Component of the ER-mitochondria encounter structure (ERMES) or MDM complex, composed of MMM1, MDM10, MDM12 and MDM34. An MMM1 homodimer associates with one molecule of MDM12 on each side in a pairwise head-to-tail manner, and the SMP-LTD domains of MMM1 and MDM12 generate a continuous hydrophobic tunnel for phospholipid trafficking.

It is found in the mitochondrion outer membrane. The protein resides in the endoplasmic reticulum membrane. In terms of biological role, component of the ERMES/MDM complex, which serves as a molecular tether to connect the endoplasmic reticulum (ER) and mitochondria. Components of this complex are involved in the control of mitochondrial shape and protein biogenesis, and function in nonvesicular lipid trafficking between the ER and mitochondria. MDM12 is required for the interaction of the ER-resident membrane protein MMM1 and the outer mitochondrial membrane-resident beta-barrel protein MDM10. The MDM12-MMM1 subcomplex functions in the major beta-barrel assembly pathway that is responsible for biogenesis of all mitochondrial outer membrane beta-barrel proteins, and acts in a late step after the SAM complex. The MDM10-MDM12-MMM1 subcomplex further acts in the TOM40-specific pathway after the action of the MDM12-MMM1 complex. Essential for establishing and maintaining the structure of mitochondria and maintenance of mtDNA nucleoids. This is Mitochondrial distribution and morphology protein 12 from Ajellomyces capsulatus (strain NAm1 / WU24) (Darling's disease fungus).